A 701-amino-acid chain; its full sequence is MGHLLSKEPRNRPSQKRPRCCSWCRRRRPLLRLPRRALAKASPQPAAPRSRDCFFRGPCMLCFIVHSPGAPASAGLEEEPPLSPPPPPPRDGAYAAVSSQHLARRYAALAAEDCAAAARRFLLSSAAAAAAAASSPASCCKELGLAAAAAWEQQGRSLFLAGVGPVRFLGPLAAVQLFRAPPAPPPQAEPATALEMVCKRKGAGVPACTPCKQPRCGCGGCGGGGGGGGGPAGGGASPPRPPDAGCCQAPEQPPPPLCPAPASPASECAPIVAAAGDTVRAGGTAPSSAQQQPESGDADCQEPPENPCDCHREPPPEIPDINQLPPSILLKIFSNLSLNERCLSASLVCKYWRDLCLDFQFWKQLDLSSRQQVTDELLEKIASRSQNIIEINISDCRSLSDSGVCVLAFKCPGLLRYTAYRCKQLSDTSIIAVASHCPLLQKVHVGNQDKLTDEGLKQLGSRCRELKDIHFGQCYKISDEGMIVIAKSCLKLQRIYMQENKLVTDQSVKAFAEHCPELQYVGFMGCSVTSKGVIHLTKLRNLSSLDLRHITELDNETVMEIVKRCKNLSSLNLCLNWIINDRCVEVIAKEGQNLKELYLVSCKITDYALIAIGRYSVTIETVDVGWCKEITDQGATLIAQSSKSLRYLGLMRCDKVNELTVEQLVQQYPHITFSTVLQDCKRTLERAYQMGWTPNMSAATS.

Disordered stretches follow at residues 73–93 (SAGLEEEPPLSPPPPPPRDGA), 227–250 (GGGGPAGGGASPPRPPDAGCCQAP), and 279–321 (VRAG…IPDI). Pro residues predominate over residues 81–90 (PLSPPPPPPR). Residues 227–236 (GGGGPAGGGA) are compositionally biased toward gly residues. Polar residues predominate over residues 285-294 (APSSAQQQPE). The F-box domain occupies 318 to 365 (IPDINQLPPSILLKIFSNLSLNERCLSASLVCKYWRDLCLDFQFWKQL).

It belongs to the FBXL17 family. As to quaternary structure, part of the SCF (SKP1-CUL1-F-box) E3 ubiquitin-protein ligase complex SCF(FBXL17) composed of CUL1, SKP1, RBX1 and FBXL17. Interacts with BTB domain-containing proteins such as KLHL12, BCL6 and BACH1; specifically recognizes and binds a conserved degron of non-consecutive residues present at the interface of BTB dimers of aberrant composition. Interacts with SUFU. Interacts with PRMT1.

The protein localises to the cytoplasm. Its subcellular location is the nucleus. Functionally, substrate-recognition component of the SCF(FBXL17) E3 ubiquitin ligase complex, a key component of a quality control pathway required to ensure functional dimerization of BTB domain-containing proteins (dimerization quality control, DQC). FBXL17 specifically recognizes and binds a conserved degron of non-consecutive residues present at the interface of BTB dimers of aberrant composition: aberrant BTB dimer are then ubiquitinated by the SCF(FBXL17) complex and degraded by the proteasome. The ability of the SCF(FBXL17) complex to eliminate compromised BTB dimers is required for the differentiation and survival of neural crest and neuronal cells. The SCF(FBXL17) complex mediates ubiquitination and degradation of BACH1. The SCF(FBXL17) complex is also involved in the regulation of the hedgehog/smoothened (Hh) signaling pathway by mediating the ubiquitination and degradation of SUFU, allowing the release of GLI1 from SUFU for proper Hh signal transduction. The SCF(FBXL17) complex mediates ubiquitination and degradation of PRMT1. The protein is F-box/LRR-repeat protein 17 of Mus musculus (Mouse).